A 69-amino-acid chain; its full sequence is uncharacterized protein (69 aa).

This is an uncharacterized protein from Mycobacterium bovis (strain ATCC BAA-935 / AF2122/97).